A 379-amino-acid polypeptide reads, in one-letter code: MKLIIAGGGTGGHLFPGIAVAEEFLSRDPANQVLFVGTERGIEARAVPAAGFPLELISAAGIRGKGGLGKLRGAAMMFNGYRQSCRLLDRFRPDAVLGVGGYASLPMLLAARTRQVPSFIHEQNAVPGMTNRLLSRFADRIFITLEESSRFFAGRRTLLTGNPLRRQILDRLGTRDQGPGIRDQEKHMTDSTGPASRVPGPRFNLLVFGGSQGAHAINMAMVAALPLLKRASVRLGITHQTGESDRERVAAAYRSAGVEARVLPFIADMASEYARADLVVCRAGATTIAEVTALAKACLFIPFPYAVDDHQRRNAEALLRQSACFMLLERELSAERLAALILQLAGDPRLVRRTGELAFSMARLDAARIIVDEILTPTN.

Residues T10–G12, N124, and R165 contribute to the UDP-N-acetyl-alpha-D-glucosamine site. Residues T174–A195 are disordered. The UDP-N-acetyl-alpha-D-glucosamine site is built by S211, I266, and Q311.

It belongs to the glycosyltransferase 28 family. MurG subfamily.

The protein resides in the cell inner membrane. It catalyses the reaction di-trans,octa-cis-undecaprenyl diphospho-N-acetyl-alpha-D-muramoyl-L-alanyl-D-glutamyl-meso-2,6-diaminopimeloyl-D-alanyl-D-alanine + UDP-N-acetyl-alpha-D-glucosamine = di-trans,octa-cis-undecaprenyl diphospho-[N-acetyl-alpha-D-glucosaminyl-(1-&gt;4)]-N-acetyl-alpha-D-muramoyl-L-alanyl-D-glutamyl-meso-2,6-diaminopimeloyl-D-alanyl-D-alanine + UDP + H(+). It functions in the pathway cell wall biogenesis; peptidoglycan biosynthesis. Its function is as follows. Cell wall formation. Catalyzes the transfer of a GlcNAc subunit on undecaprenyl-pyrophosphoryl-MurNAc-pentapeptide (lipid intermediate I) to form undecaprenyl-pyrophosphoryl-MurNAc-(pentapeptide)GlcNAc (lipid intermediate II). This is UDP-N-acetylglucosamine--N-acetylmuramyl-(pentapeptide) pyrophosphoryl-undecaprenol N-acetylglucosamine transferase from Pelobacter propionicus (strain DSM 2379 / NBRC 103807 / OttBd1).